Consider the following 293-residue polypeptide: Undecaprenyl-diphosphatase (293 aa).

The next 7 membrane-spanning stretches (helical) occupy residues 3 to 23, 43 to 63, 85 to 105, 109 to 129, 203 to 223, 238 to 258, and 269 to 289; these read IALAIKALILGIVEGLTEFLP, KGKIFEIVIQFGAILAVCWEF, INVIVATIPAITLALIFGKAI, LFNPIVVASAFILGGFVILWA, VATEFSFFLAIPVIFGATVYE, IFAVGFVAAFISAFFCVRWLL, and FAWYRIIFGIIVLATAYTHLI.

This sequence belongs to the UppP family.

Its subcellular location is the cell inner membrane. The enzyme catalyses di-trans,octa-cis-undecaprenyl diphosphate + H2O = di-trans,octa-cis-undecaprenyl phosphate + phosphate + H(+). Functionally, catalyzes the dephosphorylation of undecaprenyl diphosphate (UPP). Confers resistance to bacitracin. The polypeptide is Undecaprenyl-diphosphatase (Ralstonia pickettii (strain 12J)).